A 473-amino-acid polypeptide reads, in one-letter code: Ion-translocating oxidoreductase complex subunit C (473 aa).

2 4Fe-4S ferredoxin-type domains span residues 328–357 and 368–396; these read KNES…QQLY and TKKH…VKYF. The [4Fe-4S] cluster site is built by C337, C340, C343, C347, C376, C379, C382, and C386.

The protein belongs to the 4Fe4S bacterial-type ferredoxin family. RnfC subfamily. The complex is composed of six subunits: RnfA, RnfB, RnfC, RnfD, RnfE and RnfG. It depends on [4Fe-4S] cluster as a cofactor.

The protein resides in the cell inner membrane. In terms of biological role, part of a membrane-bound complex that couples electron transfer with translocation of ions across the membrane. The sequence is that of Ion-translocating oxidoreductase complex subunit C from Buchnera aphidicola subsp. Acyrthosiphon pisum (strain APS) (Acyrthosiphon pisum symbiotic bacterium).